Here is a 355-residue protein sequence, read N- to C-terminus: F-box protein At1g31080 (355 aa).

Positions 4-49 (GANSASIPNDLILEILSRLPAKSTGRFRCVSKLWGSMLCHSYFTEL) constitute an F-box domain. Residues 306-320 (AGTSRSPPKQSTSTS) show a composition bias toward polar residues. Residues 306 to 333 (AGTSRSPPKQSTSTSSREDHEVRTLAHQ) are disordered. Residues 321 to 333 (SREDHEVRTLAHQ) show a composition bias toward basic and acidic residues.

The protein is F-box protein At1g31080 of Arabidopsis thaliana (Mouse-ear cress).